Consider the following 233-residue polypeptide: Ribosomal RNA small subunit methyltransferase G (233 aa).

Residues Gly-91, Met-96, 142 to 143 (VE), and Arg-157 contribute to the S-adenosyl-L-methionine site.

Belongs to the methyltransferase superfamily. RNA methyltransferase RsmG family.

The protein resides in the cytoplasm. It catalyses the reaction guanosine(527) in 16S rRNA + S-adenosyl-L-methionine = N(7)-methylguanosine(527) in 16S rRNA + S-adenosyl-L-homocysteine. Specifically methylates the N7 position of guanine in position 527 of 16S rRNA. This chain is Ribosomal RNA small subunit methyltransferase G, found in Cupriavidus necator (strain ATCC 17699 / DSM 428 / KCTC 22496 / NCIMB 10442 / H16 / Stanier 337) (Ralstonia eutropha).